The chain runs to 419 residues: UDP-N-acetylglucosamine 1-carboxyvinyltransferase (419 aa).

Position 22 to 23 (Lys-22 to Asn-23) interacts with phosphoenolpyruvate. Arg-91 contacts UDP-N-acetyl-alpha-D-glucosamine. Catalysis depends on Cys-115, which acts as the Proton donor. Cys-115 is subject to 2-(S-cysteinyl)pyruvic acid O-phosphothioketal. UDP-N-acetyl-alpha-D-glucosamine contacts are provided by residues Arg-120 to Leu-124, Lys-160 to Val-163, Asp-305, and Val-327.

It belongs to the EPSP synthase family. MurA subfamily.

It localises to the cytoplasm. It catalyses the reaction phosphoenolpyruvate + UDP-N-acetyl-alpha-D-glucosamine = UDP-N-acetyl-3-O-(1-carboxyvinyl)-alpha-D-glucosamine + phosphate. It participates in cell wall biogenesis; peptidoglycan biosynthesis. Its function is as follows. Cell wall formation. Adds enolpyruvyl to UDP-N-acetylglucosamine. The polypeptide is UDP-N-acetylglucosamine 1-carboxyvinyltransferase (Salmonella dublin (strain CT_02021853)).